Here is a 207-residue protein sequence, read N- to C-terminus: Claudin-11 (207 aa).

Residue M1 is a topological domain, cytoplasmic. The helical transmembrane segment at 2-22 (VATCLQVVGFVTSFVGWIGII) threads the bilayer. The Extracellular portion of the chain corresponds to 23 to 82 (VTTSTNDWVVTCSYTIPTCRKMDELGSKGLWADCVMATGLHHCKPLVDILILPGYAQACR). Residues 83–103 (ALMIAASVLGLPGILLLLTVL) form a helical membrane-spanning segment. Residues 104–122 (PCIRMGHEPGVAKYRRAQL) are Cytoplasmic-facing. A helical transmembrane segment spans residues 123-143 (AGVLLILLALCAIVATIWFPV). Over 144–157 (CAHREITIVSFGYS) the chain is Extracellular. A helical transmembrane segment spans residues 158-178 (LYAGWIGAVMCLVGGCVIVCC). The Cytoplasmic segment spans residues 179–207 (SGDAQSFGENRFYYSSGSSSPTHAKSAHV). Phosphoserine is present on residues S193, S194, S197, and S198.

This sequence belongs to the claudin family. As to quaternary structure, interacts with tetraspanin-3/TSPAN3. Interacts with OCLN.

The protein localises to the cell junction. The protein resides in the tight junction. Its subcellular location is the cell membrane. Its function is as follows. Plays a major role in tight junction-specific obliteration of the intercellular space, through calcium-independent cell-adhesion activity. The protein is Claudin-11 (Cldn11) of Rattus norvegicus (Rat).